The sequence spans 181 residues: Negative modulator of initiation of replication (181 aa).

Interaction with DNA stretches follow at residues 87–88, 116–120, and 150–156; these read AV, RTRVY, and NTNTGRK.

The protein belongs to the SeqA family. In terms of assembly, homodimer. Polymerizes to form helical filaments.

It is found in the cytoplasm. Functionally, negative regulator of replication initiation, which contributes to regulation of DNA replication and ensures that replication initiation occurs exactly once per chromosome per cell cycle. Binds to pairs of hemimethylated GATC sequences in the oriC region, thus preventing assembly of replication proteins and re-initiation at newly replicated origins. Repression is relieved when the region becomes fully methylated. This is Negative modulator of initiation of replication from Shigella dysenteriae serotype 1 (strain Sd197).